The sequence spans 450 residues: tRNA modification GTPase MnmE (450 aa).

(6S)-5-formyl-5,6,7,8-tetrahydrofolate-binding residues include arginine 20, glutamate 78, and lysine 117. The TrmE-type G domain occupies glycine 211–glutamine 372. Asparagine 221 provides a ligand contact to K(+). GTP-binding positions include asparagine 221–threonine 226, threonine 240–threonine 246, and aspartate 265–glycine 268. Serine 225 lines the Mg(2+) pocket. Residues threonine 240, isoleucine 242, and threonine 245 each contribute to the K(+) site. Threonine 246 contacts Mg(2+). Lysine 450 lines the (6S)-5-formyl-5,6,7,8-tetrahydrofolate pocket.

The protein belongs to the TRAFAC class TrmE-Era-EngA-EngB-Septin-like GTPase superfamily. TrmE GTPase family. As to quaternary structure, homodimer. Heterotetramer of two MnmE and two MnmG subunits. It depends on K(+) as a cofactor.

The protein resides in the cytoplasm. Exhibits a very high intrinsic GTPase hydrolysis rate. Involved in the addition of a carboxymethylaminomethyl (cmnm) group at the wobble position (U34) of certain tRNAs, forming tRNA-cmnm(5)s(2)U34. This is tRNA modification GTPase MnmE from Thermotoga petrophila (strain ATCC BAA-488 / DSM 13995 / JCM 10881 / RKU-1).